A 748-amino-acid chain; its full sequence is Putative pre-mRNA-splicing factor ATP-dependent RNA helicase DHX32 (748 aa).

One can recognise a Helicase ATP-binding domain in the interval 74-240 (LEHLAHNQIV…YGNAPLVEAE (167 aa)). Residue 87 to 94 (AGPKSGKS) participates in ATP binding. The Helicase C-terminal domain maps to 263–439 (RLLFEIHHTK…SMVLFLKRMD (177 aa)). The tract at residues 706–748 (SETKDLLQQDQTPDTPPTEEPREEEPLHEANDEGTAEQRCIIQ) is disordered.

Belongs to the DEAD box helicase family. DEAH subfamily.

The protein localises to the nucleus. It localises to the mitochondrion. It carries out the reaction ATP + H2O = ADP + phosphate + H(+). The polypeptide is Putative pre-mRNA-splicing factor ATP-dependent RNA helicase DHX32 (dhx32) (Xenopus laevis (African clawed frog)).